Here is a 240-residue protein sequence, read N- to C-terminus: UDP-2,3-diacylglucosamine hydrolase (240 aa).

Mn(2+) is bound by residues Asp-8, His-10, Asp-41, Asn-79, and His-114. 79 to 80 (NR) serves as a coordination point for substrate. 5 residues coordinate substrate: Asp-122, Ser-160, Asn-164, Lys-167, and His-195. His-195 and His-197 together coordinate Mn(2+).

Belongs to the LpxH family. It depends on Mn(2+) as a cofactor.

It is found in the cell inner membrane. It carries out the reaction UDP-2-N,3-O-bis[(3R)-3-hydroxytetradecanoyl]-alpha-D-glucosamine + H2O = 2-N,3-O-bis[(3R)-3-hydroxytetradecanoyl]-alpha-D-glucosaminyl 1-phosphate + UMP + 2 H(+). Its pathway is glycolipid biosynthesis; lipid IV(A) biosynthesis; lipid IV(A) from (3R)-3-hydroxytetradecanoyl-[acyl-carrier-protein] and UDP-N-acetyl-alpha-D-glucosamine: step 4/6. Functionally, hydrolyzes the pyrophosphate bond of UDP-2,3-diacylglucosamine to yield 2,3-diacylglucosamine 1-phosphate (lipid X) and UMP by catalyzing the attack of water at the alpha-P atom. Involved in the biosynthesis of lipid A, a phosphorylated glycolipid that anchors the lipopolysaccharide to the outer membrane of the cell. This is UDP-2,3-diacylglucosamine hydrolase from Pectobacterium atrosepticum (strain SCRI 1043 / ATCC BAA-672) (Erwinia carotovora subsp. atroseptica).